We begin with the raw amino-acid sequence, 257 residues long: Ribosomal RNA small subunit methyltransferase J (257 aa).

Residues 107-108, 123-124, and Asp177 each bind S-adenosyl-L-methionine; these read RD and ER.

It belongs to the methyltransferase superfamily. RsmJ family.

It is found in the cytoplasm. The catalysed reaction is guanosine(1516) in 16S rRNA + S-adenosyl-L-methionine = N(2)-methylguanosine(1516) in 16S rRNA + S-adenosyl-L-homocysteine + H(+). Its function is as follows. Specifically methylates the guanosine in position 1516 of 16S rRNA. This is Ribosomal RNA small subunit methyltransferase J from Haemophilus influenzae (strain ATCC 51907 / DSM 11121 / KW20 / Rd).